We begin with the raw amino-acid sequence, 383 residues long: 8-amino-7-oxononanoate synthase (383 aa).

Residues arginine 27 and arginine 34 each contribute to the substrate site. 114 to 115 contacts pyridoxal 5'-phosphate; the sequence is GY. Histidine 139 provides a ligand contact to substrate. Residues serine 187, 212–215, and 232–235 contribute to the pyridoxal 5'-phosphate site; these read DDAH and TLSK. N6-(pyridoxal phosphate)lysine is present on lysine 235. Threonine 344 contributes to the substrate binding site.

This sequence belongs to the class-II pyridoxal-phosphate-dependent aminotransferase family. BioF subfamily. In terms of assembly, homodimer. Requires pyridoxal 5'-phosphate as cofactor.

The catalysed reaction is 6-carboxyhexanoyl-[ACP] + L-alanine + H(+) = (8S)-8-amino-7-oxononanoate + holo-[ACP] + CO2. The protein operates within cofactor biosynthesis; biotin biosynthesis. Functionally, catalyzes the decarboxylative condensation of pimeloyl-[acyl-carrier protein] and L-alanine to produce 8-amino-7-oxononanoate (AON), [acyl-carrier protein], and carbon dioxide. The polypeptide is 8-amino-7-oxononanoate synthase (Methylorubrum extorquens (strain CM4 / NCIMB 13688) (Methylobacterium extorquens)).